Reading from the N-terminus, the 179-residue chain is UPF0227 protein Swoo_1808 (179 aa).

This sequence belongs to the UPF0227 family.

This Shewanella woodyi (strain ATCC 51908 / MS32) protein is UPF0227 protein Swoo_1808.